A 101-amino-acid chain; its full sequence is NADH-quinone oxidoreductase subunit K (101 aa).

The next 3 helical transmembrane spans lie at 2-22 (TLSAYLALALILFCIGLYGAL), 28-48 (VIVLICIELMLNAVNINFVAF), and 62-82 (FALFAIAVAAAEAAVGLAALI).

Belongs to the complex I subunit 4L family. As to quaternary structure, NDH-1 is composed of 14 different subunits. Subunits NuoA, H, J, K, L, M, N constitute the membrane sector of the complex.

It localises to the cell membrane. The catalysed reaction is a quinone + NADH + 5 H(+)(in) = a quinol + NAD(+) + 4 H(+)(out). Functionally, NDH-1 shuttles electrons from NADH, via FMN and iron-sulfur (Fe-S) centers, to quinones in the respiratory chain. The immediate electron acceptor for the enzyme in this species is believed to be a menaquinone. Couples the redox reaction to proton translocation (for every two electrons transferred, four hydrogen ions are translocated across the cytoplasmic membrane), and thus conserves the redox energy in a proton gradient. This chain is NADH-quinone oxidoreductase subunit K, found in Geobacillus kaustophilus (strain HTA426).